A 487-amino-acid polypeptide reads, in one-letter code: Chromosomal replication initiator protein DnaA (487 aa).

Residues 1–71 are domain I, interacts with DnaA modulators; that stretch reads MMHDALFERF…TSLVQSEDPD (71 aa). Residues 71 to 141 are domain II; the sequence is DVLKVEILVR…QGGSGPLFGS (71 aa). The domain III, AAA+ region stretch occupies residues 142 to 364; the sequence is PLDTRFTFDT…GAFNQLMFRR (223 aa). Residues G188, G190, K191, and T192 each coordinate ATP. The segment at 365-487 is domain IV, binds dsDNA; the sequence is SFEPNLSVDR…LKRLINENNA (123 aa).

Belongs to the DnaA family. In terms of assembly, oligomerizes as a right-handed, spiral filament on DNA at oriC.

It is found in the cytoplasm. Functionally, plays an essential role in the initiation and regulation of chromosomal replication. ATP-DnaA binds to the origin of replication (oriC) to initiate formation of the DNA replication initiation complex once per cell cycle. Binds the DnaA box (a 9 base pair repeat at the origin) and separates the double-stranded (ds)DNA. Forms a right-handed helical filament on oriC DNA; dsDNA binds to the exterior of the filament while single-stranded (ss)DNA is stabiized in the filament's interior. The ATP-DnaA-oriC complex binds and stabilizes one strand of the AT-rich DNA unwinding element (DUE), permitting loading of DNA polymerase. After initiation quickly degrades to an ADP-DnaA complex that is not apt for DNA replication. Binds acidic phospholipids. This is Chromosomal replication initiator protein DnaA from Agrobacterium fabrum (strain C58 / ATCC 33970) (Agrobacterium tumefaciens (strain C58)).